A 196-amino-acid chain; its full sequence is Ribosome maturation factor RimP (196 aa).

The span at 131-145 shows a compositional bias: basic residues; that stretch reads KKKAGKKSQGKKAGK. The tract at residues 131–153 is disordered; it reads KKKAGKKSQGKKAGKKTPQAPVQ.

Belongs to the RimP family.

The protein resides in the cytoplasm. Required for maturation of 30S ribosomal subunits. In Corynebacterium urealyticum (strain ATCC 43042 / DSM 7109), this protein is Ribosome maturation factor RimP.